Reading from the N-terminus, the 45-residue chain is Photosystem II reaction center protein K (45 aa).

The propeptide occupies 1 to 8 (MEAVFLLA). The helical transmembrane segment at 24-44 (LPVIPVFFLALAFVWQAAVGF) threads the bilayer.

It belongs to the PsbK family. In terms of assembly, PSII is composed of 1 copy each of membrane proteins PsbA, PsbB, PsbC, PsbD, PsbE, PsbF, PsbH, PsbI, PsbJ, PsbK, PsbL, PsbM, PsbT, PsbX, PsbY, PsbZ, Psb30/Ycf12, peripheral proteins PsbO, CyanoQ (PsbQ), PsbU, PsbV and a large number of cofactors. It forms dimeric complexes.

It is found in the cellular thylakoid membrane. Functionally, one of the components of the core complex of photosystem II (PSII). PSII is a light-driven water:plastoquinone oxidoreductase that uses light energy to abstract electrons from H(2)O, generating O(2) and a proton gradient subsequently used for ATP formation. It consists of a core antenna complex that captures photons, and an electron transfer chain that converts photonic excitation into a charge separation. This chain is Photosystem II reaction center protein K, found in Crocosphaera subtropica (strain ATCC 51142 / BH68) (Cyanothece sp. (strain ATCC 51142)).